Consider the following 589-residue polypeptide: Class I diterpene synthase 2, chloroplastic (589 aa).

Mg(2+) contacts are provided by aspartate 328, aspartate 332, asparagine 472, threonine 476, and glutamate 480. The DDXXD motif signature appears at 328–332 (DDFFD).

The protein belongs to the terpene synthase family. It depends on Mg(2+) as a cofactor. Mostly expressed in trichomes of leaves and fruits.

It localises to the plastid. The protein resides in the chloroplast. It catalyses the reaction 9alpha-copalyl diphosphate + H2O = (13S)-vitexifolin A + diphosphate. The catalysed reaction is peregrinol diphosphate = (13R)-9,13-epoxylabd-14-ene + diphosphate. The enzyme catalyses peregrinol diphosphate + H2O = viteagnusin D + diphosphate. The protein operates within secondary metabolite biosynthesis; terpenoid biosynthesis. Involved in the biosynthesis of labdane-type diterpenoid including cleroda-dienols, and peregrinol lactones and furan derivatives, dopaminergic diterpenoids that can bind to dopamine receptors in the human pituitary gland, have probably ability to lower prolactin levels, and are used to treat menstrual cycle disorders (e.g. premenstrual syndrome and mastodynia). Terpene synthase the catalyzes the conversion of peregrinol diphosphate to viteagnusin D and 9,13(R)-epoxy-labd-14-ene, and of syn-copalyl diphosophate to vitexifolin A. The sequence is that of Class I diterpene synthase 2, chloroplastic from Vitex agnus-castus (Chaste tree).